A 224-amino-acid polypeptide reads, in one-letter code: Peptidyl-prolyl cis-trans isomerase FKBP3 (224 aa).

Alanine 2 is modified (N-acetylalanine). Serine 36 carries the phosphoserine modification. Basic and acidic residues predominate over residues 89–102 (KLNEDKPKETKSEE). The segment at 89 to 113 (KLNEDKPKETKSEETLDEGPPKYTK) is disordered. An N6-acetyllysine modification is found at lysine 99. One can recognise a PPIase FKBP-type domain in the interval 128-224 (GDVVHCWYTG…IFEVELVDID (97 aa)). Serine 152 carries the phosphoserine modification. The residue at position 170 (lysine 170) is an N6-acetyllysine.

The protein belongs to the FKBP-type PPIase family.

The protein resides in the nucleus. It catalyses the reaction [protein]-peptidylproline (omega=180) = [protein]-peptidylproline (omega=0). Its activity is regulated as follows. Inhibited preferentially by rapamycin over FK506. FK506- and rapamycin-binding proteins (FKBPs) constitute a family of receptors for the two immunosuppressants which inhibit T-cell proliferation by arresting two dinstinct cytoplasmic signal transmission pathways. PPIases accelerate the folding of proteins. This Bos taurus (Bovine) protein is Peptidyl-prolyl cis-trans isomerase FKBP3 (FKBP3).